Here is a 134-residue protein sequence, read N- to C-terminus: U34-theraphotoxin-Cg1a (134 aa).

The first 19 residues, 1-19, serve as a signal peptide directing secretion; it reads MKLAVVFLLTTVVFTLAQS. Intrachain disulfides connect Cys-24/Cys-35, Cys-29/Cys-53, and Cys-63/Cys-84. The segment at 97–134 is disordered; sequence EQSSTSTSSTQGPITSSTVTTQSEATTETETTTAAEGK. Residues 99–134 are compositionally biased toward low complexity; the sequence is SSTSTSSTQGPITSSTVTTQSEATTETETTTAAEGK.

This sequence belongs to the neurotoxin 32 family. In terms of tissue distribution, expressed by the venom gland.

The protein localises to the secreted. This is U34-theraphotoxin-Cg1a from Chilobrachys guangxiensis (Chinese earth tiger tarantula).